Here is a 253-residue protein sequence, read N- to C-terminus: Endonuclease NucS (253 aa).

The interval 63 to 91 (IDDPDTDFTDGSSVGNSEEQGTDGSAHTA) is disordered. The span at 71–87 (TDGSSVGNSEEQGTDGS) shows a compositional bias: polar residues.

The protein belongs to the NucS endonuclease family.

The protein resides in the cytoplasm. In terms of biological role, cleaves both 3' and 5' ssDNA extremities of branched DNA structures. This is Endonuclease NucS from Corynebacterium kroppenstedtii (strain DSM 44385 / JCM 11950 / CIP 105744 / CCUG 35717).